Consider the following 200-residue polypeptide: Ribonuclease HII (200 aa).

Residues 11 to 200 (QSIAGVDEVG…VRRALISLTG (190 aa)) enclose the RNase H type-2 domain. 3 residues coordinate a divalent metal cation: D17, E18, and D109.

Belongs to the RNase HII family. Mn(2+) serves as cofactor. Mg(2+) is required as a cofactor.

The protein resides in the cytoplasm. The catalysed reaction is Endonucleolytic cleavage to 5'-phosphomonoester.. Its function is as follows. Endonuclease that specifically degrades the RNA of RNA-DNA hybrids. This Hamiltonella defensa subsp. Acyrthosiphon pisum (strain 5AT) protein is Ribonuclease HII.